The following is a 124-amino-acid chain: Protein MGF 110-4L (124 aa).

A signal peptide spans 1 to 28; sequence MLVIFLGILGLLANQVLGLPIQAGGHLC. An N-linked (GlcNAc...) asparagine; by host glycan is attached at asparagine 64. Residues 121-124 carry the Prevents secretion from ER motif; sequence KEDL.

This sequence belongs to the asfivirus MGF 110 family.

Its subcellular location is the virion. It localises to the host endoplasmic reticulum-Golgi intermediate compartment. Its function is as follows. Causes the redistribution of lumenal ER protein to an enlarged ERGIC compartment. The chain is Protein MGF 110-4L from Ornithodoros (relapsing fever ticks).